The primary structure comprises 106 residues: ADAAPTVSIFPPSMEQLTSGGATVVCFVNNFYPRDISVKWKIDGSEQRDGVLDSVTDQDSKDSTYSMSSTLSLTKVEYERHNLYTCEVVHKTSSSPVVKSFNRNEC.

One can recognise an Ig-like domain in the interval 5–102 (PTVSIFPPSM…SSSPVVKSFN (98 aa)). A disulfide bond links C26 and C86.

This is Ig kappa chain C region, A allele from Rattus norvegicus (Rat).